Here is a 235-residue protein sequence, read N- to C-terminus: UPF0758 protein CD630_11440 (235 aa).

Positions 113 to 235 (KIMNPWDIQR…YFSFKENMII (123 aa)) constitute an MPN domain. 3 residues coordinate Zn(2+): His-184, His-186, and Asp-197. The JAMM motif signature appears at 184–197 (HNHPSGSVEPSRED).

This sequence belongs to the UPF0758 family.

In Clostridioides difficile (strain 630) (Peptoclostridium difficile), this protein is UPF0758 protein CD630_11440.